A 40-amino-acid polypeptide reads, in one-letter code: Accessory gland-specific peptide 57Db (40 aa).

A signal peptide spans 1–17; sequence MKITSALVLLFAGVAFA.

Lumen fluid of male accessory glands, becomes seminal fluid.

The protein resides in the secreted. Transferred from male to female during mating and may affect egglaying and behavior after mating. The protein is Accessory gland-specific peptide 57Db (Mst57Db) of Drosophila melanogaster (Fruit fly).